A 134-amino-acid chain; its full sequence is Large ribosomal subunit protein eL32 (134 aa).

Belongs to the eukaryotic ribosomal protein eL32 family.

The chain is Large ribosomal subunit protein eL32 (RpL32) from Drosophila melanogaster (Fruit fly).